A 419-amino-acid polypeptide reads, in one-letter code: UDP-N-acetylglucosamine 1-carboxyvinyltransferase 2 (419 aa).

A phosphoenolpyruvate-binding site is contributed by 22–23 (KN). A UDP-N-acetyl-alpha-D-glucosamine-binding site is contributed by Arg-92. The active-site Proton donor is the Cys-116. Cys-116 bears the 2-(S-cysteinyl)pyruvic acid O-phosphothioketal mark. UDP-N-acetyl-alpha-D-glucosamine is bound by residues 121-125 (RPIDL), Asp-306, and Ile-328.

Belongs to the EPSP synthase family. MurA subfamily.

The protein resides in the cytoplasm. It catalyses the reaction phosphoenolpyruvate + UDP-N-acetyl-alpha-D-glucosamine = UDP-N-acetyl-3-O-(1-carboxyvinyl)-alpha-D-glucosamine + phosphate. It functions in the pathway cell wall biogenesis; peptidoglycan biosynthesis. Its function is as follows. Cell wall formation. Adds enolpyruvyl to UDP-N-acetylglucosamine. In Streptococcus pyogenes serotype M3 (strain ATCC BAA-595 / MGAS315), this protein is UDP-N-acetylglucosamine 1-carboxyvinyltransferase 2.